Reading from the N-terminus, the 277-residue chain is S-formylglutathione hydrolase FrmB (277 aa).

Catalysis depends on charge relay system residues Ser-145, Asp-221, and His-254.

This sequence belongs to the esterase D family.

The enzyme catalyses S-formylglutathione + H2O = formate + glutathione + H(+). Its function is as follows. Serine hydrolase involved in the detoxification of formaldehyde. Hydrolyzes S-formylglutathione to glutathione and formate. The chain is S-formylglutathione hydrolase FrmB (frmB) from Escherichia coli O6:H1 (strain CFT073 / ATCC 700928 / UPEC).